The following is an 856-amino-acid chain: Leucine--tRNA ligase (856 aa).

The short motif at 42 to 52 (PYPSGNLHMGH) is the 'HIGH' region element. A 'KMSKS' region motif is present at residues 617–621 (KMSKS). Lys620 is a binding site for ATP.

This sequence belongs to the class-I aminoacyl-tRNA synthetase family.

Its subcellular location is the cytoplasm. It catalyses the reaction tRNA(Leu) + L-leucine + ATP = L-leucyl-tRNA(Leu) + AMP + diphosphate. In Rippkaea orientalis (strain PCC 8801 / RF-1) (Cyanothece sp. (strain PCC 8801)), this protein is Leucine--tRNA ligase.